Here is a 470-residue protein sequence, read N- to C-terminus: Argininosuccinate lyase (470 aa).

This sequence belongs to the lyase 1 family. Argininosuccinate lyase subfamily.

It localises to the cytoplasm. The enzyme catalyses 2-(N(omega)-L-arginino)succinate = fumarate + L-arginine. Its pathway is amino-acid biosynthesis; L-arginine biosynthesis; L-arginine from L-ornithine and carbamoyl phosphate: step 3/3. The protein is Argininosuccinate lyase of Leptospira borgpetersenii serovar Hardjo-bovis (strain L550).